A 287-amino-acid polypeptide reads, in one-letter code: Homoserine kinase (287 aa).

78-88 (PLAHGLGSSSS) is an ATP binding site.

This sequence belongs to the GHMP kinase family. Homoserine kinase subfamily.

The protein resides in the cytoplasm. It catalyses the reaction L-homoserine + ATP = O-phospho-L-homoserine + ADP + H(+). It participates in amino-acid biosynthesis; L-threonine biosynthesis; L-threonine from L-aspartate: step 4/5. Catalyzes the ATP-dependent phosphorylation of L-homoserine to L-homoserine phosphate. The chain is Homoserine kinase from Lactobacillus acidophilus (strain ATCC 700396 / NCK56 / N2 / NCFM).